The chain runs to 191 residues: Large ribosomal subunit protein eL15 (191 aa).

It belongs to the eukaryotic ribosomal protein eL15 family.

This Pyrobaculum aerophilum (strain ATCC 51768 / DSM 7523 / JCM 9630 / CIP 104966 / NBRC 100827 / IM2) protein is Large ribosomal subunit protein eL15 (rpl15e).